Here is a 270-residue protein sequence, read N- to C-terminus: Checkpoint signal transducer rad24 (270 aa).

Serine 34 and serine 66 each carry phosphoserine. The disordered stretch occupies residues 242–270 (AAAGGNTEGAQENAPSNAPEGEAEPKADA).

It belongs to the 14-3-3 family. As to quaternary structure, homodimer. Binds preferentially to mei2 phosphorylated by ran1/pat1. Binds preferentially to cdc25 phosphorylated by srk1 during G2; the interaction is increased during osmotic stress. Interacts with byr2. Interacts with rad25.

It localises to the cytoplasm. Acts in cell cycle and stress checkpoint signaling by sequestering signal transducers regulated by the checkpoints. Required for the DNA damage checkpoint that ensures that DNA damage is repaired before mitosis is attempted. During environmental stress, sequesters srk1-phosphorylated cdc25 in the cytoplasm to delay the G2/M transition. Sequesters byr2 in the cytoplasm to prevent its translocation to the plasma membrane. Sequesters ran1/pat1-phosphorylated mei2 from its non-coding RNA activators (including meiRNA), to prevent meiotic induction in vegetative cells and to regulate meiosis I. This chain is Checkpoint signal transducer rad24, found in Schizosaccharomyces pombe (strain 972 / ATCC 24843) (Fission yeast).